The following is a 509-amino-acid chain: ATP synthase subunit alpha (509 aa).

An ATP-binding site is contributed by 171–178; it reads GDRKTGKT.

It belongs to the ATPase alpha/beta chains family. F-type ATPases have 2 components, CF(1) - the catalytic core - and CF(0) - the membrane proton channel. CF(1) has five subunits: alpha(3), beta(3), gamma(1), delta(1), epsilon(1). CF(0) has three main subunits: a(1), b(2) and c(9-12). The alpha and beta chains form an alternating ring which encloses part of the gamma chain. CF(1) is attached to CF(0) by a central stalk formed by the gamma and epsilon chains, while a peripheral stalk is formed by the delta and b chains.

Its subcellular location is the cell inner membrane. The catalysed reaction is ATP + H2O + 4 H(+)(in) = ADP + phosphate + 5 H(+)(out). Functionally, produces ATP from ADP in the presence of a proton gradient across the membrane. The alpha chain is a regulatory subunit. This Ehrlichia chaffeensis (strain ATCC CRL-10679 / Arkansas) protein is ATP synthase subunit alpha.